The sequence spans 428 residues: S-adenosylmethionine synthase (428 aa).

An ATP-binding site is contributed by H14. D16 is a binding site for Mg(2+). Position 42 (E42) interacts with K(+). Residues E55 and Q98 each coordinate L-methionine. A flexible loop region spans residues 98 to 108; sequence QSGDINRGVER. Residues 165–167, 251–252, D260, 266–267, A283, and K287 contribute to the ATP site; these read DAK, KF, and RK. Residue D260 participates in L-methionine binding. K291 serves as a coordination point for L-methionine.

The protein belongs to the AdoMet synthase family. Homotetramer; dimer of dimers. Requires Mg(2+) as cofactor. The cofactor is K(+).

The protein resides in the cytoplasm. It carries out the reaction L-methionine + ATP + H2O = S-adenosyl-L-methionine + phosphate + diphosphate. The protein operates within amino-acid biosynthesis; S-adenosyl-L-methionine biosynthesis; S-adenosyl-L-methionine from L-methionine: step 1/1. In terms of biological role, catalyzes the formation of S-adenosylmethionine (AdoMet) from methionine and ATP. The overall synthetic reaction is composed of two sequential steps, AdoMet formation and the subsequent tripolyphosphate hydrolysis which occurs prior to release of AdoMet from the enzyme. This chain is S-adenosylmethionine synthase, found in Parabacteroides distasonis (strain ATCC 8503 / DSM 20701 / CIP 104284 / JCM 5825 / NCTC 11152).